A 218-amino-acid chain; its full sequence is Glutathione S-transferase D7 (218 aa).

The region spanning 1 to 82 (MTPVLYYLPP…YLVSAYGKDE (82 aa)) is the GST N-terminal domain. Glutathione contacts are provided by residues S11, 52–54 (HCI), and 66–68 (ESR). One can recognise a GST C-terminal domain in the interval 88 to 207 (DFRSRAIVDQ…KEINETGAET (120 aa)).

It belongs to the GST superfamily. Theta family. In terms of assembly, homodimer.

It catalyses the reaction RX + glutathione = an S-substituted glutathione + a halide anion + H(+). Conjugation of reduced glutathione to a wide number of exogenous and endogenous hydrophobic electrophiles. In Anopheles gambiae (African malaria mosquito), this protein is Glutathione S-transferase D7.